The sequence spans 457 residues: MDRNQKMDHVIGGKFKLGRKLGSGSFGELYLGINIQTGEEVAVKLEPVKTRHPQLQYESKIYMFLQGGTGVPHLKWFGVEGEYSCMVIDLLGPSLEDLFNYCKRIFSLKSVLMLADQLICRVEYMHSRGFLHRDIKPDNFLMGLGRRANQVYIIDYGLAKKYKDLQTQKHIPYRENKNLTGTARYASVNTHLGIEQSRRDDLESLGYVLMYFLRGSLPWQGLKAGTKKQKYDKISEKKMLTSVETLCKSYPSEFTSYFHYCRSLRFEDKPDYSYLRRLFRDLFIREGYQLDYVFDWTISKYPQIGSSSRPRPTPRPALDPPGPPAERAEKPTVGQDLRGRFTGAIEAFTRRNVSSQGALGDRSRHRSSDDIPSSAKEVHESRNGSTSKRGVISSTRPGSSAEPSENHSSRLFSSGSRHATTQRVPQSYESAAAARPGHEDAIRNFELLTIGSGKKRK.

Positions 15-284 (FKLGRKLGSG…LRRLFRDLFI (270 aa)) constitute a Protein kinase domain. ATP is bound by residues 21-29 (LGSGSFGEL) and Lys44. Catalysis depends on Asp134, which acts as the Proton acceptor. 2 disordered regions span residues 305–337 (GSSS…GQDL) and 352–442 (NVSS…EDAI). Residues 311–324 (RPTPRPALDPPGPP) are compositionally biased toward pro residues. Composition is skewed to polar residues over residues 383–403 (NGST…SAEP) and 409–429 (SRLF…QSYE).

The protein belongs to the protein kinase superfamily. CK1 Ser/Thr protein kinase family. Casein kinase I subfamily. As to quaternary structure, monomer. Autophosphorylated.

The protein localises to the cytoplasm. The protein resides in the nucleus. The enzyme catalyses L-seryl-[protein] + ATP = O-phospho-L-seryl-[protein] + ADP + H(+). The catalysed reaction is L-threonyl-[protein] + ATP = O-phospho-L-threonyl-[protein] + ADP + H(+). With respect to regulation, partially inhibited by N-(2-aminoethyl)-5-chloroisoquinoline-8-sulfonamide (CKI-7). In terms of biological role, casein kinases are operationally defined by their preferential utilization of acidic proteins such as caseins as substrates. Can phosphorylate casein, phosvitin, myosin light chains and poly(Glu,Tyr) in vitro. This chain is Casein kinase 1-like protein 11, found in Arabidopsis thaliana (Mouse-ear cress).